The sequence spans 555 residues: TBCC domain-containing protein 1 (555 aa).

A C-CAP/cofactor C-like domain is found at 302-433; the sequence is PEVSPMVIMS…LEDHMAQVGL (132 aa).

It belongs to the TBCC family.

The protein resides in the cytoplasm. It localises to the cytoskeleton. The protein localises to the microtubule organizing center. It is found in the centrosome. Its subcellular location is the spindle pole. Its function is as follows. May play a role in the regulation of centrosome and Golgi apparatus positioning. This chain is TBCC domain-containing protein 1 (TBCCD1), found in Gallus gallus (Chicken).